Here is a 239-residue protein sequence, read N- to C-terminus: Large ribosomal subunit protein uL2 (239 aa).

Disordered regions lie at residues 1–21 and 203–239; these read MGKS…KSPS and PFGG…GRRK. Residues 222-239 show a composition bias toward basic residues; that stretch reads PPGRKVGHIAARRTGRRK.

This sequence belongs to the universal ribosomal protein uL2 family. Part of the 50S ribosomal subunit. Forms a bridge to the 30S subunit in the 70S ribosome.

Its function is as follows. One of the primary rRNA binding proteins. Required for association of the 30S and 50S subunits to form the 70S ribosome, for tRNA binding and peptide bond formation. It has been suggested to have peptidyltransferase activity; this is somewhat controversial. Makes several contacts with the 16S rRNA in the 70S ribosome. The protein is Large ribosomal subunit protein uL2 of Pyrococcus furiosus (strain ATCC 43587 / DSM 3638 / JCM 8422 / Vc1).